A 196-amino-acid chain; its full sequence is MADS-box transcription factor 32 (196 aa).

One can recognise an MADS-box domain in the interval 1–61 (MGRGRSEIKR…GKLYHFLSPT (61 aa)). One can recognise a K-box domain in the interval 85–175 (RQERRAELEK…CDKIAHAQTL (91 aa)).

The protein localises to the nucleus. Its function is as follows. Probable transcription factor. The polypeptide is MADS-box transcription factor 32 (MADS32) (Oryza sativa subsp. japonica (Rice)).